We begin with the raw amino-acid sequence, 918 residues long: Glutamate receptor ionotropic, kainate 1 (918 aa).

An N-terminal signal peptide occupies residues methionine 1–proline 30. Topologically, residues glutamine 31–proline 576 are extracellular. Asparagine 68, asparagine 74, asparagine 276, asparagine 379, asparagine 428, asparagine 439, and asparagine 446 each carry an N-linked (GlcNAc...) asparagine glycan. Positions 531, 533, and 538 each coordinate L-glutamate. The N-linked (GlcNAc...) asparagine glycan is linked to asparagine 561. Residues aspartate 577–alanine 597 form a helical membrane-spanning segment. Residues arginine 598–glycine 653 are Cytoplasmic-facing. A helical membrane pass occupies residues isoleucine 654–leucine 674. Residues threonine 675–asparagine 834 lie on the Extracellular side of the membrane. Serine 704 and threonine 705 together coordinate L-glutamate. The residue at position 725 (serine 725) is a Phosphoserine; by PKC. Residue glutamate 753 participates in L-glutamate binding. Threonine 761 bears the Phosphothreonine; by PKC mark. An intrachain disulfide couples cysteine 765 to cysteine 819. Residue asparagine 766 is glycosylated (N-linked (GlcNAc...) asparagine). Residues isoleucine 835–glycine 855 traverse the membrane as a helical segment. Residues glutamate 856–valine 918 lie on the Cytoplasmic side of the membrane.

It belongs to the glutamate-gated ion channel (TC 1.A.10.1) family. GRIK1 subfamily. In terms of assembly, homotetramer or heterotetramer of pore-forming glutamate receptor subunits. Tetramers may be formed by the dimerization of dimers. Can form functional heteromeric receptors with GRIK4 and GRIK5. Interacts with KLHL17.

The protein resides in the cell membrane. It is found in the postsynaptic cell membrane. The enzyme catalyses Ca(2+)(in) = Ca(2+)(out). In terms of biological role, ionotropic glutamate receptor that functions as a cation-permeable ligand-gated ion channel, gated by L-glutamate and the glutamatergic agonist kainic acid. L-glutamate acts as an excitatory neurotransmitter at many synapses in the central nervous system. Binding of the excitatory neurotransmitter L-glutamate induces a conformation change, leading to the opening of the cation channel, and thereby converts the chemical signal to an electrical impulse. The receptor then desensitizes rapidly and enters a transient inactive state, characterized by the presence of bound agonist. The sequence is that of Glutamate receptor ionotropic, kainate 1 (GRIK1) from Macaca fascicularis (Crab-eating macaque).